The following is a 438-amino-acid chain: Alkylcitrate synthase tstJ (438 aa).

Catalysis depends on residues histidine 309 and aspartate 365.

It belongs to the citrate synthase family.

The catalysed reaction is (2E,10E)-dode-2,10-dicenoyl-CoA + oxaloacetate + H2O = (4E,11E)-2-hydroxytrideca-4,11-dien-1,2,3-tricarboxylate + CoA + H(+). The protein operates within secondary metabolite biosynthesis. In terms of biological role, alkylcitrate synthase; part of the gene cluster that mediates the biosynthesis of the antihypercholesterolemic agents phomoidrides which are dimeric anhydrides. Within the pathway, the alkylcitrate synthase (ACS) tstJ and the alkylcitrate dehydratase (ACDH) tstI produce the decarboxylated monomeric anhydrides by coupling the C12-fatty acyl product from phiA with oxalacetic acid. The pathway begins with the highly reducing polyketide synthase tstA that catalyzes the formation of a C12-fatty acyl-ACP, starting from one acetate and 5 malonate units. The hydrolase tstM is involved in the release of the C12-fatty acyl chain from phiA. The alkylcitrate synthase (ACS) tstJ and the alkylcitrate dehydratase (ACDH) tstI then give rise to decarboxylated monomeric anhydrides by coupling the C12-fatty acyl chain with oxalacetic acid. The cyclase tstC is responsible for the dimerization of the monomeric anhydrides which leads to the production of prephomoidride that contains the characteristic bicyclo[4.3.1]deca-1,6-diene system of phomoidrides. Iterative oxidation catalyzed by the alpha-ketoglutarate-dependent dioxygenase tstK produced then phomoidride A. Finally, the methyltransferase tstE converts phomoidride A to phomoidride B via an acetalization reaction. The phosphatidylethanolamine-binding protein tstB and tstN are not essential for dimerization and their functions have still to be determined. The polypeptide is Alkylcitrate synthase tstJ (Talaromyces stipitatus (strain ATCC 10500 / CBS 375.48 / QM 6759 / NRRL 1006) (Penicillium stipitatum)).